The primary structure comprises 675 residues: Potassium-transporting ATPase ATP-binding subunit (675 aa).

Helical transmembrane passes span 38 to 58 (VMFV…ANLV), 67 to 87 (LAIT…EGMA), 216 to 236 (IALS…VVTL), and 253 to 273 (IALL…AIGI). Aspartate 304 (4-aspartylphosphate intermediate) is an active-site residue. Residues aspartate 341, glutamate 345, 371–378 (FTAQTRMS), and lysine 389 each bind ATP. Mg(2+) is bound by residues aspartate 512 and aspartate 516. 3 helical membrane-spanning segments follow: residues 582 to 602 (FAIL…LNVM), 610 to 630 (AVLS…PLAL), and 654 to 674 (GGIL…GGLM).

The protein belongs to the cation transport ATPase (P-type) (TC 3.A.3) family. Type IA subfamily. As to quaternary structure, the system is composed of three essential subunits: KdpA, KdpB and KdpC.

It is found in the cell membrane. It carries out the reaction K(+)(out) + ATP + H2O = K(+)(in) + ADP + phosphate + H(+). Part of the high-affinity ATP-driven potassium transport (or Kdp) system, which catalyzes the hydrolysis of ATP coupled with the electrogenic transport of potassium into the cytoplasm. This subunit is responsible for energy coupling to the transport system and for the release of the potassium ions to the cytoplasm. The polypeptide is Potassium-transporting ATPase ATP-binding subunit (Deinococcus radiodurans (strain ATCC 13939 / DSM 20539 / JCM 16871 / CCUG 27074 / LMG 4051 / NBRC 15346 / NCIMB 9279 / VKM B-1422 / R1)).